The primary structure comprises 765 residues: MSFLWGSTKSKKGKNKKAAGSLPSGVVPQQRVKPTRKNVPIDYPRTLEKVHGESLIFRTSLLSELVSTGKSGIGPPDLIHCTELDKFHDEKIGEFFYITGIDASSVSMPIAFLKLIKWNDGKKLKSASLKNDDITTYCTFNIFQKLDIRLRYESEDVYQVNIVDCLNGNNEIPLSDLIWEETFVSCCIRSVIINSDFERKIPGLVELPFVFENRCASDYKRVIDSLCKFLPRFLECGWDSTKSVYATILNNYLTESLLVFLSITPEFITDYAIQVLDNLMTNDPSNSRYYAIVIISIMERSNDRDVEMIKRIHEILDLLLPVLYGLPSDEPYISDLINCITDVLSIQARFLLNNNDYELSLSISTLATNLSSDNFESWYLLSKGYIFSQQYDKALLSINSMPCLAEYDIVKQAQINAFKFYMNYYKAPLCHSREHCTMTSHELNHLMNIMHYENELELKTIIFGRTVMPNESKYGCIEEIWNKSCLELGPICGPQSDNLINFVSQQEVNTVGDMLLLKRSKETRQESWFIKQVRLLLMELVARIGWNALLQLRSDVFVMESKFKMIESSDKLSTELRQKRLCQRWFDAMFLDVYEDLSISTSSQENKATAKYSGLEWELLGLTLLRVSDLPDAVACLRTSILARFDPISCHHLLNFYLTMDFNDEFMRRFDVDIILDLLVKLISFRIRFYDRFQIFSLQVLRKLEGQLGSEIIKNKIINSPYGQAGITSVIDYMLECLSKNRNEACLAYERPLPDLPSTIKPLAD.

Residues 1-31 (MSFLWGSTKSKKGKNKKAAGSLPSGVVPQQR) are disordered. Residues 735 to 765 (LECLSKNRNEACLAYERPLPDLPSTIKPLAD) form a CHS5-binding region.

This sequence belongs to the CHAPS family. In terms of assembly, component of the CHS5/6 complex composed of the 4 CHAPS proteins BCH1, BCH2, BUD7, and CHS6 as well as at least CHS5 and GTP-bound ARF1. The complex interacts with the cargo protein CHS3.

The protein resides in the golgi apparatus. Its subcellular location is the trans-Golgi network membrane. In terms of biological role, member of the CHS5-ARF1P-binding proteins (CHAPS) which mediates export of specific cargo proteins, including chitin synthase CHS3. In Saccharomyces cerevisiae (strain ATCC 204508 / S288c) (Baker's yeast), this protein is Protein BCH2 (BCH2).